The sequence spans 470 residues: Argininosuccinate lyase (470 aa).

Belongs to the lyase 1 family. Argininosuccinate lyase subfamily.

The protein localises to the cytoplasm. The catalysed reaction is 2-(N(omega)-L-arginino)succinate = fumarate + L-arginine. It functions in the pathway amino-acid biosynthesis; L-arginine biosynthesis; L-arginine from L-ornithine and carbamoyl phosphate: step 3/3. The chain is Argininosuccinate lyase from Mycobacterium leprae (strain Br4923).